The sequence spans 142 residues: Neuritin (142 aa).

Positions 1–27 (MGLKLNGRYISLILAVQIAYLVQAVRA) are cleaved as a signal peptide. Gly116 carries GPI-anchor amidated glycine lipidation. Positions 117 to 142 (AAGSLLPAFPVLLVSLSAALATWLSF) are cleaved as a propeptide — removed in mature form.

It belongs to the neuritin family. Component of the outer core of AMPAR complex. AMPAR complex consists of an inner core made of 4 pore-forming GluA/GRIA proteins (GRIA1, GRIA2, GRIA3 and GRIA4) and 4 major auxiliary subunits arranged in a twofold symmetry. One of the two pairs of distinct binding sites is occupied either by CNIH2, CNIH3 or CACNG2, CACNG3. The other harbors CACNG2, CACNG3, CACNG4, CACNG8 or GSG1L. This inner core of AMPAR complex is complemented by outer core constituents binding directly to the GluA/GRIA proteins at sites distinct from the interaction sites of the inner core constituents. Outer core constituents include at least PRRT1, PRRT2, CKAMP44/SHISA9, FRRS1L and NRN1. The proteins of the inner and outer core serve as a platform for other, more peripherally associated AMPAR constituents. Alone or in combination, these auxiliary subunits control the gating and pharmacology of the AMPAR complex and profoundly impact their biogenesis and protein processing.

Its subcellular location is the cell membrane. The protein resides in the synapse. Functionally, promotes neurite outgrowth and especially branching of neuritic processes in primary hippocampal and cortical cells. This is Neuritin (NRN1) from Homo sapiens (Human).